A 240-amino-acid chain; its full sequence is 7-cyano-7-deazaguanine synthase (240 aa).

14–24 (FSGGQDSATCL) contributes to the ATP binding site. Zn(2+) is bound by residues Cys-202, Cys-217, Cys-220, and Cys-223.

The protein belongs to the QueC family. Zn(2+) serves as cofactor.

It catalyses the reaction 7-carboxy-7-deazaguanine + NH4(+) + ATP = 7-cyano-7-deazaguanine + ADP + phosphate + H2O + H(+). It functions in the pathway purine metabolism; 7-cyano-7-deazaguanine biosynthesis. In terms of biological role, catalyzes the ATP-dependent conversion of 7-carboxy-7-deazaguanine (CDG) to 7-cyano-7-deazaguanine (preQ(0)). This chain is 7-cyano-7-deazaguanine synthase, found in Rhodopseudomonas palustris (strain BisB18).